The chain runs to 473 residues: Trehalose-6-phosphate synthase (473 aa).

Arg-10 contributes to the D-glucose 6-phosphate binding site. 21-22 (GG) lines the UDP-alpha-D-glucose pocket. 2 residues coordinate D-glucose 6-phosphate: Tyr-76 and Asp-130. Positions 262 and 267 each coordinate UDP-alpha-D-glucose. D-glucose 6-phosphate is bound at residue Arg-300. Residues Phe-339 and 365 to 369 (LVAKE) contribute to the UDP-alpha-D-glucose site.

Belongs to the glycosyltransferase 20 family. In terms of assembly, homotetramer.

The enzyme catalyses D-glucose 6-phosphate + UDP-alpha-D-glucose = alpha,alpha-trehalose 6-phosphate + UDP + H(+). The protein operates within glycan biosynthesis; trehalose biosynthesis. Its function is as follows. Probably involved in the osmoprotection via the biosynthesis of trehalose. Catalyzes the transfer of glucose from UDP-alpha-D-glucose (UDP-Glc) to D-glucose 6-phosphate (Glc-6-P) to form trehalose-6-phosphate. Acts with retention of the anomeric configuration of the UDP-sugar donor. In Salmonella arizonae (strain ATCC BAA-731 / CDC346-86 / RSK2980), this protein is Trehalose-6-phosphate synthase (otsA).